The sequence spans 69 residues: uncharacterized protein (69 aa).

Residues 1-21 form the signal peptide; sequence MNTKFILILLVLIISTIFVNS.

The protein resides in the secreted. This is an uncharacterized protein from Dictyostelium discoideum (Social amoeba).